The sequence spans 1092 residues: Fibrinogen-binding protein (1092 aa).

Positions 1 to 51 (MINKKNNLLTKKKPIANKSNKYAIRKFTVGTASIVIGATLLFGLGHNEAKA) are cleaved as a signal peptide. The segment covering 50–63 (KAEENSVQDVKDSN) has biased composition (basic and acidic residues). The segment at 50 to 236 (KAEENSVQDV…GYTNIDEKIS (187 aa)) is disordered. The segment at 52–599 (EENSVQDVKD…GQGQGDLPPE (548 aa)) is ligand binding A region. The segment covering 64 to 76 (TDDELSDSNDQSS) has biased composition (acidic residues). The span at 84-98 (INNNQSINTDDNNQI) shows a compositional bias: low complexity. Positions 99 to 119 (IKKEETNNYDGIEKRSEDRTE) are enriched in basic and acidic residues. The segment covering 120–140 (STTNVDENEATFLQKTPQDNT) has biased composition (polar residues). Basic and acidic residues predominate over residues 141 to 151 (HLTEEEVKESS). A compositionally biased stretch (polar residues) spans 160-170 (IDTAQQPSHTT). A compositionally biased stretch (basic and acidic residues) spans 195–220 (KIKESNTESGKEENTIEQPNKVKEDS). Ca(2+) is bound by residues E294, S299, V302, and E309. An interaction with human fibrinogen region spans residues 579–590 (YDNTIAFSTSSG). 2 CNA-B domains span residues 600–713 (KTYK…YQTP) and 714–824 (KYSL…YDDE). The disordered stretch occupies residues 780-1068 (KPSGMTQTTT…NEDYGSKGTL (289 aa)). Positions 791–801 (SGDDDEQDADG) are enriched in acidic residues. Positions 802–814 (EEVHVTITDHDDF) are enriched in basic and acidic residues. Residues 820 to 1039 (YYDDESDSDS…DSDSDSDNDS (220 aa)) are compositionally biased toward acidic residues. The LPXTG sorting signal signature appears at 1053 to 1057 (LPDTG). Residue T1056 is modified to Pentaglycyl murein peptidoglycan amidated threonine. The propeptide at 1057 to 1092 (GANEDYGSKGTLLGTLFAGLGALLLGKRRKNRKNKN) is removed by sortase.

This sequence belongs to the serine-aspartate repeat-containing protein (SDr) family.

The protein localises to the secreted. It localises to the cell wall. Promotes bacterial attachment to both soluble and immobilized forms of fibrinogen in a dose-dependent manner. This binding occurs through the beta-chain of human fibrinogen. Could contribute to the initiation of foreign-body infection by allowing bacteria to adhere to biomaterial surfaces that have become coated with host proteins after implantation. Is important in the pathogenesis of central venous catheter (CVC)-associated infection model. This Staphylococcus epidermidis protein is Fibrinogen-binding protein (fbe).